Consider the following 554-residue polypeptide: 3-(3-hydroxy-phenyl)propionate/3-hydroxycinnamic acid hydroxylase (554 aa).

FAD contacts are provided by residues Q17–K46 and F285–D295.

The protein belongs to the PheA/TfdB FAD monooxygenase family. FAD serves as cofactor.

It carries out the reaction 3-(3-hydroxyphenyl)propanoate + NADH + O2 + H(+) = 3-(2,3-dihydroxyphenyl)propanoate + NAD(+) + H2O. The enzyme catalyses (2E)-3-(3-hydroxyphenyl)prop-2-enoate + NADH + O2 + H(+) = (2E)-3-(2,3-dihydroxyphenyl)prop-2-enoate + NAD(+) + H2O. Its pathway is aromatic compound metabolism; 3-phenylpropanoate degradation. Functionally, catalyzes the insertion of one atom of molecular oxygen into position 2 of the phenyl ring of 3-(3-hydroxyphenyl)propionate (3-HPP) and hydroxycinnamic acid (3HCI). In Klebsiella pneumoniae (strain 342), this protein is 3-(3-hydroxy-phenyl)propionate/3-hydroxycinnamic acid hydroxylase.